The following is a 201-amino-acid chain: Molybdenum cofactor guanylyltransferase (201 aa).

GTP-binding positions include 15–17, K28, D74, and D104; that span reads LAG. A Mg(2+)-binding site is contributed by D104.

This sequence belongs to the MobA family. As to quaternary structure, monomer. Mg(2+) is required as a cofactor.

Its subcellular location is the cytoplasm. It catalyses the reaction Mo-molybdopterin + GTP + H(+) = Mo-molybdopterin guanine dinucleotide + diphosphate. In terms of biological role, transfers a GMP moiety from GTP to Mo-molybdopterin (Mo-MPT) cofactor (Moco or molybdenum cofactor) to form Mo-molybdopterin guanine dinucleotide (Mo-MGD) cofactor. The polypeptide is Molybdenum cofactor guanylyltransferase (Pseudomonas syringae pv. tomato (strain ATCC BAA-871 / DC3000)).